A 210-amino-acid chain; its full sequence is Prolactin (210 aa).

The signal sequence occupies residues M1 to G23. Disulfide bonds link C69–C183 and C200–C210.

It belongs to the somatotropin/prolactin family. As to expression, pituitary gland.

Its subcellular location is the secreted. The polypeptide is Prolactin (prl1) (Carassius auratus (Goldfish)).